Reading from the N-terminus, the 336-residue chain is DNA polymerase III subunit delta' (336 aa).

In terms of assembly, DNA polymerase III contains a core (composed of alpha, epsilon and theta chains) that associates with a tau subunit. This core dimerizes to form the POLIII' complex. PolIII' associates with the gamma complex (composed of gamma, delta, delta', psi and chi chains) and with the beta chain to form the complete DNA polymerase III complex.

The enzyme catalyses DNA(n) + a 2'-deoxyribonucleoside 5'-triphosphate = DNA(n+1) + diphosphate. DNA polymerase III is a complex, multichain enzyme responsible for most of the replicative synthesis in bacteria. This DNA polymerase also exhibits 3' to 5' exonuclease activity. In Buchnera aphidicola subsp. Baizongia pistaciae (strain Bp), this protein is DNA polymerase III subunit delta' (holB).